The following is a 418-amino-acid chain: 3-phosphoshikimate 1-carboxyvinyltransferase (418 aa).

3-phosphoshikimate contacts are provided by K26, S27, and R31. K26 contributes to the phosphoenolpyruvate binding site. The phosphoenolpyruvate site is built by G97 and R125. S170, S171, Q172, D297, N320, and K324 together coordinate 3-phosphoshikimate. Q172 lines the phosphoenolpyruvate pocket. D297 functions as the Proton acceptor in the catalytic mechanism. Residues R328, R375, and K400 each coordinate phosphoenolpyruvate.

This sequence belongs to the EPSP synthase family. In terms of assembly, monomer.

It is found in the cytoplasm. The enzyme catalyses 3-phosphoshikimate + phosphoenolpyruvate = 5-O-(1-carboxyvinyl)-3-phosphoshikimate + phosphate. It participates in metabolic intermediate biosynthesis; chorismate biosynthesis; chorismate from D-erythrose 4-phosphate and phosphoenolpyruvate: step 6/7. Catalyzes the transfer of the enolpyruvyl moiety of phosphoenolpyruvate (PEP) to the 5-hydroxyl of shikimate-3-phosphate (S3P) to produce enolpyruvyl shikimate-3-phosphate and inorganic phosphate. This chain is 3-phosphoshikimate 1-carboxyvinyltransferase, found in Pseudomonas syringae pv. tomato (strain ATCC BAA-871 / DC3000).